Consider the following 311-residue polypeptide: CARD domain-containing protein E10 (311 aa).

The CARD domain occupies 21 to 110 (IWDVERLCLE…EHLVDLLERA (90 aa)). Disordered stretches follow at residues 125–181 (ESGA…GGVY), 203–230 (GAGRGGSLLSGGHGGHPPHGGPGGGGRD), and 243–311 (IPEP…FFCC). Positions 140 to 152 (EDNSGYTALLPTN) are enriched in polar residues. Gly residues predominate over residues 252-272 (SGGGGRGGGVRYDAGGDGRLG).

It is found in the host cell membrane. Functionally, activates host NF-kappa-B and JNK pathways. Induces hyperphosphorylation and redistribution of host bcl-10 from the cytoplasm to the plasma membrane. The inhibitory effect of cellular bcl-10 on NF-kappa-B pathway is then overcome allowing NF-kappa-B activation. This chain is CARD domain-containing protein E10 (E10), found in Equus caballus (Horse).